Reading from the N-terminus, the 168-residue chain is Crossover junction endodeoxyribonuclease RuvC (168 aa).

Catalysis depends on residues D9, E70, and D145. Mg(2+)-binding residues include D9, E70, and D145.

Belongs to the RuvC family. As to quaternary structure, homodimer which binds Holliday junction (HJ) DNA. The HJ becomes 2-fold symmetrical on binding to RuvC with unstacked arms; it has a different conformation from HJ DNA in complex with RuvA. In the full resolvosome a probable DNA-RuvA(4)-RuvB(12)-RuvC(2) complex forms which resolves the HJ. Requires Mg(2+) as cofactor.

Its subcellular location is the cytoplasm. It carries out the reaction Endonucleolytic cleavage at a junction such as a reciprocal single-stranded crossover between two homologous DNA duplexes (Holliday junction).. Its function is as follows. The RuvA-RuvB-RuvC complex processes Holliday junction (HJ) DNA during genetic recombination and DNA repair. Endonuclease that resolves HJ intermediates. Cleaves cruciform DNA by making single-stranded nicks across the HJ at symmetrical positions within the homologous arms, yielding a 5'-phosphate and a 3'-hydroxyl group; requires a central core of homology in the junction. The consensus cleavage sequence is 5'-(A/T)TT(C/G)-3'. Cleavage occurs on the 3'-side of the TT dinucleotide at the point of strand exchange. HJ branch migration catalyzed by RuvA-RuvB allows RuvC to scan DNA until it finds its consensus sequence, where it cleaves and resolves the cruciform DNA. The polypeptide is Crossover junction endodeoxyribonuclease RuvC (Chlamydia pneumoniae (Chlamydophila pneumoniae)).